A 148-amino-acid chain; its full sequence is Endoribonuclease YbeY (148 aa).

Zn(2+)-binding residues include H105, H109, and D115.

Belongs to the endoribonuclease YbeY family. The cofactor is Zn(2+).

The protein localises to the cytoplasm. In terms of biological role, single strand-specific metallo-endoribonuclease involved in late-stage 70S ribosome quality control and in maturation of the 3' terminus of the 16S rRNA. This is Endoribonuclease YbeY from Chlorobium phaeovibrioides (strain DSM 265 / 1930) (Prosthecochloris vibrioformis (strain DSM 265)).